We begin with the raw amino-acid sequence, 286 residues long: Bifunctional protein FolD (286 aa).

NADP(+)-binding positions include 165-167 and Ser190; that span reads GRS.

Belongs to the tetrahydrofolate dehydrogenase/cyclohydrolase family. Homodimer.

It carries out the reaction (6R)-5,10-methylene-5,6,7,8-tetrahydrofolate + NADP(+) = (6R)-5,10-methenyltetrahydrofolate + NADPH. The catalysed reaction is (6R)-5,10-methenyltetrahydrofolate + H2O = (6R)-10-formyltetrahydrofolate + H(+). Its pathway is one-carbon metabolism; tetrahydrofolate interconversion. Catalyzes the oxidation of 5,10-methylenetetrahydrofolate to 5,10-methenyltetrahydrofolate and then the hydrolysis of 5,10-methenyltetrahydrofolate to 10-formyltetrahydrofolate. This Paraburkholderia xenovorans (strain LB400) protein is Bifunctional protein FolD.